Reading from the N-terminus, the 316-residue chain is Pantothenate kinase (316 aa).

95–102 (GSVAVGKS) is an ATP binding site.

The protein belongs to the prokaryotic pantothenate kinase family.

Its subcellular location is the cytoplasm. It catalyses the reaction (R)-pantothenate + ATP = (R)-4'-phosphopantothenate + ADP + H(+). The protein operates within cofactor biosynthesis; coenzyme A biosynthesis; CoA from (R)-pantothenate: step 1/5. The sequence is that of Pantothenate kinase from Enterobacter sp. (strain 638).